The sequence spans 248 residues: Ribonuclease 3 (248 aa).

The region spanning 6–136 (LAYLQTLIGS…LIGAIYLDKG (131 aa)) is the RNase III domain. Glu49 contributes to the Mg(2+) binding site. The active site involves Asp53. Residues Asp122 and Glu125 each coordinate Mg(2+). Glu125 is an active-site residue. A DRBM domain is found at 163 to 231 (NYKSCLIEYS…AKEAMERIIA (69 aa)).

This sequence belongs to the ribonuclease III family. In terms of assembly, homodimer. Requires Mg(2+) as cofactor.

The protein resides in the cytoplasm. The catalysed reaction is Endonucleolytic cleavage to 5'-phosphomonoester.. Digests double-stranded RNA. Involved in the processing of primary rRNA transcript to yield the immediate precursors to the large and small rRNAs (23S and 16S). Processes some mRNAs, and tRNAs when they are encoded in the rRNA operon. Processes pre-crRNA and tracrRNA of type II CRISPR loci if present in the organism. This is Ribonuclease 3 from Chlorobium chlorochromatii (strain CaD3).